The primary structure comprises 323 residues: Cytoskeleton protein RodZ (323 aa).

Residues 1 to 111 (MNTEASQDKT…LGKRRKKRDG (111 aa)) are Cytoplasmic-facing. Residues 19 to 71 (LRQAREQLGLSQQAVAERLCLKMSTVRDIEEDNLSADLASTFVRGYIRSYAKL) enclose the HTH cro/C1-type domain. Residues 30–49 (QQAVAERLCLKMSTVRDIEE) constitute a DNA-binding region (H-T-H motif). Residues 112–132 (WLMSFTWLIVFVVVGLTGAWW) traverse the membrane as a helical; Signal-anchor for type II membrane protein segment. Over 133-323 (WQNHKAQQEE…RVARLTVAAQ (191 aa)) the chain is Periplasmic. Composition is skewed to polar residues over residues 149-172 (QSSAQLSQNNEGQSVPLTDSNADN) and 179-214 (NGSTPVDTGVAPQQSQTPAVSGSATAQQPAVVSPSQ). The interval 149–236 (QSSAQLSQNN…APLPTADAGV (88 aa)) is disordered. Residues 215-234 (TTLPETTPAAPTAPLPTADA) show a composition bias toward low complexity.

It belongs to the RodZ family.

It localises to the cell inner membrane. In terms of biological role, cytoskeletal protein that is involved in cell-shape control through regulation of the length of the long axis. The protein is Cytoskeleton protein RodZ of Serratia proteamaculans (strain 568).